Reading from the N-terminus, the 262-residue chain is Dihydroorotate dehydrogenase B (NAD(+)), electron transfer subunit (262 aa).

Positions 2 to 102 (SKVFDAKVLA…MGPLGRGFTL (101 aa)) constitute an FAD-binding FR-type domain. Residues 53–56 (RPIS), 70–72 (LFR), and 77–78 (GT) contribute to the FAD site. The [2Fe-2S] cluster site is built by C224, C229, C232, and C248.

It belongs to the PyrK family. Heterotetramer of 2 PyrK and 2 PyrD type B subunits. However, the metal reductase complex seems to be composed of a heterooctamer of 4 PyrK and 4 PyrD subunits. Requires FAD as cofactor. [2Fe-2S] cluster serves as cofactor.

Its subcellular location is the cytoplasm. Its pathway is pyrimidine metabolism; UMP biosynthesis via de novo pathway; orotate from (S)-dihydroorotate (NAD(+) route): step 1/1. In terms of biological role, responsible for channeling the electrons from the oxidation of dihydroorotate from the FMN redox center in the PyrD type B subunit to the ultimate electron acceptor NAD(+). Its function is as follows. Together with PyrD, also forms a metal reductase complex able to reduce Fe(III)-chelates to Fe(II)-chelates, as well as soluble Cr(VI) and U(VI), using NADH as electron donor. To a lesser extent, can also use NADPH as an electron donor. Is unable to reduce riboflavin and FMN with NADH as electron donor. May have an in vivo role in metal reduction in D.reducens, which is an organism capable of reducing contaminant heavy metals and radionuclides. This chain is Dihydroorotate dehydrogenase B (NAD(+)), electron transfer subunit, found in Desulforamulus reducens (strain ATCC BAA-1160 / DSM 100696 / MI-1) (Desulfotomaculum reducens).